Reading from the N-terminus, the 115-residue chain is Large ribosomal subunit protein P2 (115 aa).

N-acetylmethionine is present on M1. Residues S17 and S19 each carry the phosphoserine modification. K21 is modified (N6-acetyllysine; alternate). K21 carries the post-translational modification N6-succinyllysine; alternate. Positions 76–90 (APGSAAPAAGSAPAA) are enriched in low complexity. The disordered stretch occupies residues 76–115 (APGSAAPAAGSAPAAAEEKKEEKKEESEESDDDMGFGLFD). S79 and S86 each carry phosphoserine. Basic and acidic residues predominate over residues 91–101 (AEEKKEEKKEE). S102 and S105 each carry phosphoserine.

The protein belongs to the eukaryotic ribosomal protein P1/P2 family. In terms of assembly, heterodimer with RPLP1 at the lateral ribosomal stalk of the large ribosomal subunit.

In terms of biological role, plays an important role in the elongation step of protein synthesis. This chain is Large ribosomal subunit protein P2 (RPLP2), found in Bos taurus (Bovine).